A 132-amino-acid polypeptide reads, in one-letter code: Small ribosomal subunit protein uS8 (132 aa).

Belongs to the universal ribosomal protein uS8 family. As to quaternary structure, part of the 30S ribosomal subunit. Contacts proteins S5 and S12.

Its function is as follows. One of the primary rRNA binding proteins, it binds directly to 16S rRNA central domain where it helps coordinate assembly of the platform of the 30S subunit. The chain is Small ribosomal subunit protein uS8 from Borrelia turicatae (strain 91E135).